Here is a 726-residue protein sequence, read N- to C-terminus: Germacradienol/geosmin synthase (726 aa).

Positions 2–354 are germacradienol/germacrene D synthase; sequence TQQPFQLPHF…TSAADVGALL (353 aa). Mg(2+)-binding residues include D86, E91, N267, T271, Q276, D455, N598, S602, and E606. The short motif at 86 to 91 is the DDXXD motif 1; degenerate element; sequence DDHFLE. Positions 355 to 726 are geosmin synthase; that stretch reads ADAVAQRARS…VPRSSPALTH (372 aa). The DDXXD motif 2; degenerate signature appears at 455-459; that stretch reads DDYYP.

Belongs to the terpene synthase family. Requires Mg(2+) as cofactor.

It catalyses the reaction (2E,6E)-farnesyl diphosphate + H2O = (1E,4S,5E,7R)-germacra-1(10),5-dien-11-ol + diphosphate. The enzyme catalyses (1E,4S,5E,7R)-germacra-1(10),5-dien-11-ol + H2O = (-)-geosmin + acetone. It carries out the reaction (2E,6E)-farnesyl diphosphate = (-)-germacrene D + diphosphate. It participates in secondary metabolite biosynthesis; geosmin biosynthesis. Its pathway is sesquiterpene biosynthesis; germacradienol biosynthesis; germacradienol from farnesyl diphosphate: step 1/1. The protein operates within sesquiterpene biosynthesis; germacrene D biosynthesis; germacrene D from farnesyl diphosphate: step 1/1. In terms of biological role, tow-domain protein where the N-terminal domain catalyzes the cyclization of farnesyl diphosphate (FPP) to a 85:15 mixture of the sesquiterpene alcohol germacradienol and the sesquiterpene hydrocarbon germacrene D. The C-terminal domain partially converts the germacradienol formed into geosmin, the characteristic odoriferous ('earthy aroma') constituent of Streptomyces species. The protein is Germacradienol/geosmin synthase (cyc2) of Streptomyces coelicolor (strain ATCC BAA-471 / A3(2) / M145).